Reading from the N-terminus, the 1384-residue chain is MSSLVERLRIRSDRKPVYNLDDSDDDDFVPKKDRTFEQVEAIVRTDAKENACQACGESTNLVSCNTCTYAFHAKCLVPPLKDASVENWRCPECVSPLNEIDKILDCEMRPTKSSEQGSSDAEPKPIFVKQYLVKWKGLSYLHCSWVPEKEFQKAYKSNHRLKTRVNNFHRQMESFNNSEDDFVAIRPEWTTVDRILACREEDGELEYLVKYKELSYDECYWESESDISTFQNEIQRFKDVNSRTRRSKDVDHKRNPRDFQQFDHTPEFLKGLLHPYQLEGLNFLRFSWSKQTHVILADEMGLGKTIQSIALLASLFEENLIPHLVIAPLSTLRNWEREFATWAPQMNVVMYFGTAQARAVIREHEFYLSKDQKKIKKKKSGQISSESKQKRIKFDVLLTSYEMINLDSAVLKPIKWECMIVDEGHRLKNKDSKLFSSLTQYSSNHRILLTGTPLQNNLDELFMLMHFLDAGKFGSLEEFQEEFKDINQEEQISRLHKMLAPHLLRRVKKDVMKDMPPKKELILRVDLSSLQKEYYKAIFTRNYQVLTKKGGAQISLNNIMMELRKVCCHPYMLEGVEPVIHDANEAFKQLLESCGKLQLLDKMMVKLKEQGHRVLIYTQFQHMLDLLEDYCTHKKWQYERIDGKVGGAERQIRIDRFNAKNSNKFCFLLSTRAGGLGINLATADTVIIYDSDWNPHADLQAMARAHRLGQTNKVMIYRLINRGTIEERMMQLTKKKMVLEHLVVGKLKTQNINQEELDDIIRYGSKELFASEDDEAGKSGKIHYDDAAIDKLLDRDLVEAEEVSVDDEEENGFLKAFKVANFEYIDENEAAALEAQRVAAESKSSAGNSDRASYWEELLKDKFELHQAEELNALGKRKRSRKQLVSIEEDDLAGLEDVSSDGDESYEAESTDGEAAGQGVQTGRRPYRRKGRDNLEPTPLMEGEGRSFRVLGFNQSQRAIFVQTLMRYGAGNFDWKEFVPRLKQKTFEEINEYGILFLKHIAEEIDENSPTFSDGVPKEGLRIEDVLVRIALLILVQEKVKFVEDHPGKPVFPSRILERFPGLRSGKIWKEEHDKIMIRAVLKHGYGRWQAIVDDKELGIQELICKELNFPHISLSAAEQAGLQGQNGSGGSNPGAQTNQNPGSVITGNNNASADGAQVNSMFYYRDMQRRLVEFVKKRVLLLEKAMNYEYAEEYYGLGGSSSIPTEEPEAEPKIADTVGVSFIEVDDEMLDGLPKTDPITSEEIMGAAVDNNQARVEIAQHYNQMCKLLDENARESVQAYVNNQPPSTKVNESFRALKSINGNINTILSITSDQSKSHEDDTKPDLNNVEMKDTAEETKPLRGGVVDLNVVEGEENIAEASGSVDVKMEEAKEEEKPKNMVVD.

Ser-23 bears the Phosphoserine mark. Residues 49–96 (ENACQACGESTNLVSCNTCTYAFHAKCLVPPLKDASVENWRCPECVSP) form a PHD-type zinc finger. 2 consecutive Chromo domains span residues 98–180 (NEID…NSED) and 190–249 (TTVD…RSKD). The Helicase ATP-binding domain occupies 285-471 (RFSWSKQTHV…FMLMHFLDAG (187 aa)). An ATP-binding site is contributed by 298-305 (DEMGLGKT). The Nuclear localization signal motif lies at 376 to 383 (KKKKSGQI). A DEAH box motif is present at residues 422–425 (DEGH). Residues 599-760 (LLDKMMVKLK…NINQEELDDI (162 aa)) form the Helicase C-terminal domain. Over residues 893 to 912 (AGLEDVSSDGDESYEAESTD) the composition is skewed to acidic residues. Disordered stretches follow at residues 893 to 941 (AGLE…TPLM), 1122 to 1152 (GLQG…NNNA), 1313 to 1344 (SDQS…PLRG), and 1365 to 1384 (VDVK…MVVD). Residues 1138-1152 (TNQNPGSVITGNNNA) show a composition bias toward polar residues. Composition is skewed to basic and acidic residues over residues 1316–1341 (SKSH…ETKP) and 1367–1384 (VKME…MVVD).

This sequence belongs to the SNF2/RAD54 helicase family. In terms of assembly, interacts with TAF12B. Mostly expressed in tissue undergoing significant differentiation (meristems and primordia) such as young seedlings, influorescent tissue and young siliques, but not in endosperm and seed coat (at protein level). Levels decrease as organs age. Also present in trichomes.

The protein resides in the nucleus. Functionally, chromatin remodeling factor that represses the expression of embryonic trait genes (such as NFYB9/LEC1) upon and after seed germination and thus enables the developmental switch to post-germinative growth. Silences some MADS-box proteins such as PHE1 and PHE2. Plays a role during carpel differentiation. Regulates late processes in cytokinin signaling. The protein is CHD3-type chromatin-remodeling factor PICKLE (PKL) of Arabidopsis thaliana (Mouse-ear cress).